Here is a 614-residue protein sequence, read N- to C-terminus: Afadin- and alpha-actinin-binding protein (614 aa).

2 coiled-coil regions span residues 131–227 and 266–293; these read MDHL…IAMD and RQKQ…SLLS. Ser290, Ser293, and Ser312 each carry phosphoserine. Residues 292–317 are disordered; the sequence is LSPQKKKPRERVDDSTGTVISDVEED. The stretch at 374–460 forms a coiled coil; sequence ISRQDHEQET…RSFTEAAIRL (87 aa). A phosphoserine mark is found at Ser536, Ser540, and Ser542.

This sequence belongs to the ADIP family. Interacts with afadin and alpha-actinin. Interacts with VAV2. Interacts with SSX2 and SSX3. Does not interact with SSX1 and SSX4. Interacts with PCM1. Interacts with WRAP73. Widely expressed, with the highest expression in brain, intermediate expression in kidney, testis, spinal cord, liver, heart, lung, skeletal muscle, ovary, fetal liver and fetal brain, and little to no expression in pancreas and spleen. All specific brain regions showed intermediate to high expression, with highest expression in amygdala. Also expressed in fetal tissues, mainly in liver and brain.

Its subcellular location is the cell junction. It is found in the adherens junction. The protein localises to the nucleus. The protein resides in the cytoplasm. It localises to the cytoskeleton. Its subcellular location is the microtubule organizing center. It is found in the centrosome. The protein localises to the centriolar satellite. The protein resides in the cilium basal body. Belongs to an adhesion system, which plays a role in the organization of homotypic, interneuronal and heterotypic cell-cell adherens junctions (AJs). May connect the nectin-afadin and E-cadherin-catenin system through alpha-actinin and may be involved in organization of the actin cytoskeleton at AJs through afadin and alpha-actinin. Involved in cell movement: localizes at the leading edge of moving cells in response to PDGF and is required for the formation of the leading edge and the promotion of cell movement, possibly via activation of Rac signaling. Acts as a centrosome maturation factor, probably by maintaining the integrity of the pericentriolar material and proper microtubule nucleation at mitotic spindle poles. The function seems to implicate at least in part WRAP73; the SSX2IP:WRAP73 complex is proposed to act as regulator of spindle anchoring at the mitotic centrosome. Involved in ciliogenesis. It is required for targeted recruitment of the BBSome, CEP290, RAB8, and SSTR3 to the cilia. In Homo sapiens (Human), this protein is Afadin- and alpha-actinin-binding protein (SSX2IP).